We begin with the raw amino-acid sequence, 212 residues long: Large ribosomal subunit protein uL1 (212 aa).

It belongs to the universal ribosomal protein uL1 family. As to quaternary structure, part of the 50S ribosomal subunit.

Functionally, binds directly to 23S rRNA. Probably involved in E site tRNA release. Its function is as follows. Protein L1 is also a translational repressor protein, it controls the translation of its operon by binding to its mRNA. The sequence is that of Large ribosomal subunit protein uL1 from Halobacterium salinarum (strain ATCC 29341 / DSM 671 / R1).